Consider the following 526-residue polypeptide: MSENIHSHRILILDFGSQYTQLIARRVREIGVYCEIYPFDMSEADIREFNPKGVILAGGPESVTELGSPRAPECLFNMDLPLLGICYGMQTMAEQMGGKVAGSNVREFGYAQVKIERSEDGLFENIKDHVAEDGKPLLDVWMSHGDKVVALPEGFVISASTPSAPIAAMQHESKPWFGVQFHPEVTHTLQGRRMLERFLVNICGCKQLWTPGRIIEDAITQVRNQVGQDKVLLGLSGGVDSSVVAALLHRAIGDQLTCVFVDNGLLRLHEGDQVMDMFAKNMGIKVVRANAQDQFLSKLAGENDPERKRKIIGHTFIEVFDAEAAKIKDVKWLAQGTIYPDVIESAAAKTGKAHVIKSHHNVGGLPEDMEMQLVEPLRELFKDEVRKIGLELGLPYDMVYRHPFPGPGLGVRILGEVKKEYADILREADAIFIEELHRAELYHKVSQAFAVFLPVKSVGVVGDARRYEYVIALRAVETIDFMTARWAHLPYELLEKISNRIINEISGVSRVVYDVSSKPPATIEWE.

Positions 9–208 constitute a Glutamine amidotransferase type-1 domain; that stretch reads RILILDFGSQ…LVNICGCKQL (200 aa). C86 acts as the Nucleophile in catalysis. Residues H182 and E184 contribute to the active site. Residues 209-401 enclose the GMPS ATP-PPase domain; it reads WTPGRIIEDA…LGLPYDMVYR (193 aa). 236–242 lines the ATP pocket; the sequence is SGGVDSS.

In terms of assembly, homodimer.

The catalysed reaction is XMP + L-glutamine + ATP + H2O = GMP + L-glutamate + AMP + diphosphate + 2 H(+). The protein operates within purine metabolism; GMP biosynthesis; GMP from XMP (L-Gln route): step 1/1. In terms of biological role, catalyzes the synthesis of GMP from XMP. This chain is GMP synthase [glutamine-hydrolyzing], found in Hahella chejuensis (strain KCTC 2396).